A 941-amino-acid polypeptide reads, in one-letter code: Pre-mRNA-processing factor 6 (941 aa).

The disordered stretch occupies residues 1-79 (MNKKKKPFLG…DEDLNDTNYD (79 aa)). Basic and acidic residues predominate over residues 39 to 65 (DANDPVDDRHAPPGKRTVGDQMKKNQA). Positions 66-78 (ADDDDEDLNDTNY) are enriched in acidic residues. At S143 the chain carries Phosphoserine. A phosphothreonine mark is found at T180, T266, and T275. A Phosphoserine modification is found at S279. HAT repeat units lie at residues 384–416 (TDIR…LEEP), 418–444 (DARI…ARLE), 445–476 (TYEN…LEEA), 554–586 (NALE…FEKN), 588–620 (GTRE…SKWL), 622–654 (GDVP…LESE), 689–721 (GNIS…IEEQ), 723–755 (ELME…LEEK), and 855–887 (RKIT…FELQ).

In terms of assembly, identified in the spliceosome B complex. Identified in the spliceosome C complex. Associates with the U5 snRNP particle. Component of the U4/U6-U5 tri-snRNP complex composed of the U4, U6 and U5 snRNAs and at least PRPF3, PRPF4, PRPF6, PRPF8, PRPF31, SNRNP200, TXNL4A, SNRNP40, DDX23, CD2BP2, PPIH, SNU13, EFTUD2, SART1 and USP39, LSm proteins LSm2-8 and Sm proteins. Interacts with ARAF1. Interacts with AR and NR3C1, but not ESR1, independently of the presence of hormones. Interacts with USH1G. Phosphorylated by PRP4K during spliceosome assembly.

It localises to the nucleus. Its subcellular location is the nucleoplasm. The protein localises to the nucleus speckle. Functionally, involved in pre-mRNA splicing as component of the U4/U6-U5 tri-snRNP complex, one of the building blocks of the spliceosome. Enhances dihydrotestosterone-induced transactivation activity of AR, as well as dexamethasone-induced transactivation activity of NR3C1, but does not affect estrogen-induced transactivation. The protein is Pre-mRNA-processing factor 6 (Prpf6) of Mus musculus (Mouse).